Consider the following 481-residue polypeptide: MMIMPEEGHPLSRMLASYPPQALRCDLPAGSLFGTDGIRGKAGDLLTAPFALQVGYWAGQVLQETAARRAPVIIGQDSRNSSDMLAMAIAAGLTASGLEVWHVGLCPTPCVSYLARTTDAIGGIMISASHNPPEDNGIKFFSDAGTKLLKDLSAKIEAGLRGDRLENILSQTNNCGSYQHQKELTQQYRNAVFATLPQGLSLDGLKIVLDLAWGASVHLAPELFQALGAEVIALHHQPDGNKINVNCGSTHIDQLQGAVQFHNADLGFAFDGDADRVIAVDNTGRIVDGDYILYLWGKQLQAAGQLPNNLIVGTVMANLGFERAWEKLGGQLHRTAVGDQYVQAAMWQTGAMLGGEQSGHILCHHHSVSGDGIQTALHLAALVREAGVPLNELIDQSFQTYPQFLKNVRVEDRDRRLNWQNCDVLQTEIAKAEAAMGDKGRVLVRASGTEPVIRVMVEAEEQYLAEYWTQHLVNVVQSHLG.

Catalysis depends on Ser129, which acts as the Phosphoserine intermediate. Ser129, Asp271, Asp273, and Asp275 together coordinate Mg(2+). Ser129 bears the Phosphoserine mark.

It belongs to the phosphohexose mutase family. Mg(2+) serves as cofactor. In terms of processing, activated by phosphorylation.

The catalysed reaction is alpha-D-glucosamine 1-phosphate = D-glucosamine 6-phosphate. Its function is as follows. Catalyzes the conversion of glucosamine-6-phosphate to glucosamine-1-phosphate. This Picosynechococcus sp. (strain ATCC 27264 / PCC 7002 / PR-6) (Agmenellum quadruplicatum) protein is Phosphoglucosamine mutase.